Consider the following 404-residue polypeptide: L-cysteine:1D-myo-inositol 2-amino-2-deoxy-alpha-D-glucopyranoside ligase (404 aa).

C47 lines the Zn(2+) pocket. Residues 47–50, T62, and 85–87 each bind L-cysteinyl-5'-AMP; these read CGIT and NIT. Residues 49-59 carry the 'HIGH' region motif; sequence ITPYDSTHLGH. The 'ERGGDP' region signature appears at 188 to 193; sequence ERGGDP. Residue W228 participates in L-cysteinyl-5'-AMP binding. Zn(2+) is bound at residue C232. 250–252 is an L-cysteinyl-5'-AMP binding site; it reads GSD. H257 provides a ligand contact to Zn(2+). I284 lines the L-cysteinyl-5'-AMP pocket. Residues 290 to 294 carry the 'KMSKS' region motif; it reads KMSKS.

This sequence belongs to the class-I aminoacyl-tRNA synthetase family. MshC subfamily. In terms of assembly, monomer. Requires Zn(2+) as cofactor.

The enzyme catalyses 1D-myo-inositol 2-amino-2-deoxy-alpha-D-glucopyranoside + L-cysteine + ATP = 1D-myo-inositol 2-(L-cysteinylamino)-2-deoxy-alpha-D-glucopyranoside + AMP + diphosphate + H(+). Functionally, catalyzes the ATP-dependent condensation of GlcN-Ins and L-cysteine to form L-Cys-GlcN-Ins. This chain is L-cysteine:1D-myo-inositol 2-amino-2-deoxy-alpha-D-glucopyranoside ligase, found in Corynebacterium striatum.